Consider the following 453-residue polypeptide: MENILGLMSKDDWIYTGLLLFSFGASCYVRKIGNNILASGALGFAMSLFIIGPKIVYSLGICSIAISIQLLANKKSTPLYVFLTTFTYLMFVRFAHYILPVNEVASHTNVIQLIITLRIIGITFEENDAWVHKSDENPTKRYLTELPTILEKFAYFYHFCGLFTGPYYTYQMLIDSQNPILKSWDPTLEVKSRFVRLLWSVPVFVITNHYFPLDILRSDAIWEVSFFTRLVYAALIFVVFKTRVYSAWAIAESICVILGIGIYPAASNPKIIMGPTDLNAFDKLKTRENIEMSSDAIVNLDIPKVEFSDGFRDGMKAWNRSVQTWLALYVHSRVKVMRVETTMLVSAVWHGTYAGYFMSFGVVAMCAILEDVIFKLVPVDTETGVRPKWFRILYTHTIRCRGFEMLATGFLLKNAYDVHHFWSSIYYWLPLLCIPFYIYSAKISKPKKAQKSE.

7 helical membrane-spanning segments follow: residues 4 to 24 (ILGL…FSFG), 36 to 56 (ILAS…PKIV), 79 to 99 (LYVF…HYIL), 154 to 174 (AYFY…QMLI), 195 to 215 (VRLL…PLDI), 220 to 240 (AIWE…FVVF), and 244 to 264 (VYSA…GIYP). A glycan (N-linked (GlcNAc...) asparagine) is linked at asparagine 319. Histidine 350 is an active-site residue. Helical transmembrane passes span 354 to 374 (AGYF…DVIF) and 421 to 441 (FWSS…IYSA).

It belongs to the membrane-bound acyltransferase family. Expressed ubiquitously throughout development from early embryo to larval and adult stages. In adults, strongly expressed in pharyngeal muscle, body wall muscle, vulval cells, distal tip cells, intestinal cells and spermatheca.

It localises to the membrane. The catalysed reaction is 1-octadecanoyl-sn-glycero-3-phospho-(1D-myo-inositol) + (5Z,8Z,11Z,14Z,17Z)-eicosapentaenoyl-CoA = 1-octadecanoyl-2-(5Z,8Z,11Z,14Z,17Z-eicosapentaenoyl)-sn-glycero-3-phospho-(1D-myo-inositol) + CoA. The enzyme catalyses a 1-acyl-sn-glycero-3-phospho-(1D-myo-inositol) + (5Z,8Z,11Z,14Z,17Z)-eicosapentaenoyl-CoA = a 1-acyl-2-(5Z,8Z,11Z,14Z,17Z-eicosapentaenoyl)-sn-glycero-3-phospho-(1D-myo-inositol) + CoA. It catalyses the reaction a 1-acyl-sn-glycero-3-phospho-(1D-myo-inositol) + (5Z,8Z,11Z,14Z)-eicosatetraenoyl-CoA = a 1-acyl-2-(5Z,8Z,11Z,14Z-eicosatetraenoyl)-sn-glycero-3-phospho-(1D-myo-inositol) + CoA. The protein operates within lipid metabolism; phospholipid metabolism. Functionally, acyltransferase which mediates the conversion of lysophosphatidylinositol (1-acyl-sn-glycero-3-phosphatidylinositol or LPI) into phosphatidylinositol (1,2-diacyl-sn-glycero-3-phosphoinositol or PI) (LPIAT activity). Prefers sn-2-LPI rather than sn-1-LPI as the acyl acceptor. Lysophospholipid acyltransferases (LPLATs) catalyze the reacylation step of the phospholipid remodeling pathway also known as the Lands cycle. Involved in the selective incorporation of arachidonoyl-CoA ((5Z,8Z,11Z,14Z)-eicosatetraenoyl-CoA) and (5Z,8Z,11Z,14Z,17Z)-eicosapentaenoyl-CoA (EPA-CoA) into PI. Besides its role in biomembranes, PI is a precursor of PI 3-phosphate (PIP3) and its fatty acid composition has an important role in PI3P signaling. The polypeptide is Membrane-bound acylglycerophosphatidylinositol O-acyltransferase mboa-7 (Caenorhabditis elegans).